A 304-amino-acid polypeptide reads, in one-letter code: Non-specific ribonucleoside hydrolase RihC (304 aa).

Residue His-233 is part of the active site.

This sequence belongs to the IUNH family. RihC subfamily.

In terms of biological role, hydrolyzes both purine and pyrimidine ribonucleosides with a broad-substrate specificity. The sequence is that of Non-specific ribonucleoside hydrolase RihC from Escherichia coli (strain SMS-3-5 / SECEC).